Reading from the N-terminus, the 456-residue chain is MSRIRRFLATALAAATAGVGAIVTAIASAGPAHAYDSPFYVDPQSNAAKWVAANPNDPRTPVIRDRIAAVPTGRWFANYNPSTVRAEVDAYVGAAAAAGKIPIMVVYAMPNRDCGGPSAGGAPNHTAYRAWIDEIAAGLRNRPAVIILEPDALPIMTNCMSPSEQAEVQASAVGAGKKFKAASSQAKVYFDAGHDAWVPADEMASRLRGADIANSADGIALNVSNYRYTSGLISYAKSVLSAIGASHLRAVIDTSRNGNGPLGSEWCDPPGRATGTWSTTDTGDPAIDAFLWIKPPGEADGCIATPGVFVPDRAYELAMNAAPPTYSPSPTPSTPSPSPSQSDPGSPSPSPSQPPAGRACEATYALVNQWPGGFQAEVTVKNTGSSPINGWTVQWTLPSGQSITQLWNGDLSTSGSNVTVRNVSWNGNVPAGGSTSFGFLGSGTGQLSSSITCSAS.

The signal sequence occupies residues 1–30 (MSRIRRFLATALAAATAGVGAIVTAIASAG). The segment at 31-322 (PAHAYDSPFY…RAYELAMNAA (292 aa)) is catalytic. Residue aspartate 113 is part of the active site. 2 disulfide bridges follow: cysteine 114–cysteine 159 and cysteine 267–cysteine 302. Residue aspartate 151 is the Proton donor of the active site. A disordered region spans residues 255 to 280 (SRNGNGPLGSEWCDPPGRATGTWSTT). The active-site Nucleophile is aspartate 300. Positions 321 to 358 (AAPPTYSPSPTPSTPSPSPSQSDPGSPSPSPSQPPAGR) are disordered. The interval 323–355 (PPTYSPSPTPSTPSPSPSQSDPGSPSPSPSQPP) is linker ('hinge') (Pro-Ser box). Pro residues predominate over residues 325–338 (TYSPSPTPSTPSPS). The CBM2 domain occupies 353–456 (QPPAGRACEA…LSSSITCSAS (104 aa)). Cysteine 360 and cysteine 453 are oxidised to a cystine.

This sequence belongs to the glycosyl hydrolase 6 (cellulase B) family.

The enzyme catalyses Endohydrolysis of (1-&gt;4)-beta-D-glucosidic linkages in cellulose, lichenin and cereal beta-D-glucans.. The sequence is that of Endoglucanase A (celA) from Thermobispora bispora (Microbispora bispora).